Reading from the N-terminus, the 409-residue chain is O-glucosyltransferase rumi (409 aa).

The signal sequence occupies residues 1-20 (MLINVVLIILLVGLNGKASG). Cystine bridges form between Cys62–Cys73, Cys71–Cys376, Cys118–Cys124, and Cys280–Cys303. Asp149 acts as the Proton donor/acceptor in catalysis. An interaction with the consensus sequence C-X-S-X-[PA]-C in peptide substrates region spans residues 190–195 (ATKLHP). UDP-alpha-D-glucose-binding positions include 227-231 (RGSRT), Arg235, 274-276 (VSF), and 292-296 (AASFR). A Prevents secretion from ER motif is present at residues 406 to 409 (KDEL).

Belongs to the glycosyltransferase 90 family.

The protein resides in the endoplasmic reticulum lumen. It participates in protein modification; protein glycosylation. Its function is as follows. Protein O-glucosyltransferase. Catalyzes the reaction that attaches glucose through an O-glycosidic linkage to a conserved serine residue found in the consensus sequence C-X-S-X-[PA]-C in epidermal growth factor-like repeats. Regulates Notch signaling by glucosylating Notch in the ER, glucosylation is required for the correct folding and cleavage of Notch. This is O-glucosyltransferase rumi from Drosophila pseudoobscura pseudoobscura (Fruit fly).